Consider the following 249-residue polypeptide: MDQAKKYANLLDSFRSSTEDILLLERLEVSDKPIYVLDSSFNPPHFAHLGMCLSIPKGSQLLLLLSITNADKPVAPAAFNERILMMEKLKTLIHNCTVSVAICKHALFVDKCRSISNKLGPREQVYLVGFDTLIRILDCKYYKEKAMQQVLQPFFSCSQILCFSREVDGTTTDDQAQYLEKIKKSLLPNIPSQWSEKIKLTKLKGNVGFGVSSTRARQAIISGDEETQRKIIPQEILNVIKVIQPYRHR.

2 residues coordinate NAD(+): serine 40 and phenylalanine 41. Residue histidine 48 coordinates ATP. 5 residues coordinate NAD(+): threonine 97, glycine 129, aspartate 131, arginine 165, and asparagine 206. 214–217 (TRAR) contacts ATP.

The protein belongs to the eukaryotic NMN adenylyltransferase family. POF1 subfamily.

It is found in the cytoplasm. It localises to the nucleus. It catalyses the reaction beta-nicotinamide D-ribonucleotide + ATP + H(+) = diphosphate + NAD(+). It participates in cofactor biosynthesis; NAD(+) biosynthesis; NAD(+) from nicotinamide D-ribonucleotide: step 1/1. Functionally, catalyzes the formation of NAD(+) from nicotinamide mononucleotide (NMN) and ATP. Involved in the salvage pathway for NAD(+) biosynthesis via NMN. The protein is Putative nicotinamide mononucleotide adenylyltransferase of Schizosaccharomyces pombe (strain 972 / ATCC 24843) (Fission yeast).